Reading from the N-terminus, the 743-residue chain is Adhesion defective protein 2 (743 aa).

Positions 1–36 (MADPGLRSGVGLPSQQGQKHDLQKDQKQPHVNNADR) are disordered. A compositionally biased stretch (basic and acidic residues) spans 18–28 (QKHDLQKDQKQ). The LisH domain occupies 38–70 (TQSLLNSYIYDYLIKKDYCEAARAFGREAQVQT). 4 disordered regions span residues 79–127 (NSLA…PPPP), 264–361 (LQSV…QYPV), 379–426 (RNPH…YGFS), and 476–692 (KERK…KSSD). Ser-89 carries the phosphoserine modification. Residues 98–114 (ISNNESSDENMNVNNGN) are compositionally biased toward polar residues. Over residues 264-281 (LQSVQQQQKQHQQKKTPQ) the composition is skewed to low complexity. 5 stretches are compositionally biased toward polar residues: residues 282–297 (SGSTPQMQNTTSQPTT), 315–353 (IPSSPKTEGAPSNAQFRPSLPATPNGSVPQSNPLYDTTG), 390–399 (PSSTLPQQQK), 408–426 (QQPSTGQFSGNQMNQYGFS), and 482–500 (TSASPDRPLSQTITESSVA). Residues 501 to 520 (KTKSTTPKSTDTPTEATTSP) show a composition bias toward low complexity. 2 stretches are compositionally biased toward polar residues: residues 521-544 (VKVSTKNSNTTENLNGINESNMPM) and 556-566 (DHPSNYSNLIE). The span at 567 to 578 (NSSTSDTNNADN) shows a compositional bias: low complexity. Residues 586 to 602 (WQLQQTHSSRPTPNASS) are compositionally biased toward polar residues. A compositionally biased stretch (low complexity) spans 612–631 (PSSANSNAPTPAPTVNTTNP). Residues 661-670 (DNQNQSGKSN) show a composition bias toward polar residues. Positions 671–688 (PDTSATPSAPTESTTVAT) are enriched in low complexity.

Belongs to the FLO8 family.

Its subcellular location is the cytoplasm. The protein localises to the nucleus. Its function is as follows. Probable transcriptional regulator involved in cell adhesion. The polypeptide is Adhesion defective protein 2 (adn2) (Schizosaccharomyces pombe (strain 972 / ATCC 24843) (Fission yeast)).